Reading from the N-terminus, the 99-residue chain is Protein S100-Z (99 aa).

EF-hand domains follow at residues 13 to 48 (IRIF…FLSC) and 50 to 85 (KETQ…LTVA). Positions 20, 23, 28, 33, 63, 65, 67, 69, and 74 each coordinate Ca(2+).

It belongs to the S-100 family. Homodimer. Interacts with S100P. In terms of tissue distribution, highest level of expression in spleen and leukocytes.

The chain is Protein S100-Z from Homo sapiens (Human).